A 493-amino-acid polypeptide reads, in one-letter code: Alpha-amylase-related protein (493 aa).

The first 19 residues, 1–19 (MFKLAFTLTLCLAGSLSLA), serve as a signal peptide directing secretion. Residue glutamine 20 is modified to Pyrrolidone carboxylic acid. The cysteines at positions 47 and 103 are disulfide-linked. Ca(2+) contacts are provided by asparagine 117, glutamine 168, and aspartate 177. A disulfide bond links cysteine 156 and cysteine 170. Position 205 (arginine 205) interacts with chloride. Aspartate 207 functions as the Nucleophile in the catalytic mechanism. Histidine 211 provides a ligand contact to Ca(2+). The active-site Proton donor is glutamate 244. Chloride-binding residues include asparagine 307 and arginine 342. Disulfide bonds link cysteine 375–cysteine 381, cysteine 417–cysteine 440, and cysteine 447–cysteine 459.

It belongs to the glycosyl hydrolase 13 family. Monomer. It depends on Ca(2+) as a cofactor. Chloride serves as cofactor.

It localises to the secreted. It catalyses the reaction Endohydrolysis of (1-&gt;4)-alpha-D-glucosidic linkages in polysaccharides containing three or more (1-&gt;4)-alpha-linked D-glucose units.. The protein is Alpha-amylase-related protein (Amyrel) of Drosophila orena (Fruit fly).